We begin with the raw amino-acid sequence, 510 residues long: Histidine ammonia-lyase (510 aa).

The segment at residues Ala143–Gly145 is a cross-link (5-imidazolinone (Ala-Gly)). Ser144 is subject to 2,3-didehydroalanine (Ser).

The protein belongs to the PAL/histidase family. Post-translationally, contains an active site 4-methylidene-imidazol-5-one (MIO), which is formed autocatalytically by cyclization and dehydration of residues Ala-Ser-Gly.

It localises to the cytoplasm. It catalyses the reaction L-histidine = trans-urocanate + NH4(+). The protein operates within amino-acid degradation; L-histidine degradation into L-glutamate; N-formimidoyl-L-glutamate from L-histidine: step 1/3. This chain is Histidine ammonia-lyase, found in Psychromonas ingrahamii (strain DSM 17664 / CCUG 51855 / 37).